The primary structure comprises 882 residues: Alanine--tRNA ligase (882 aa).

Positions 571, 575, 673, and 677 each coordinate Zn(2+).

The protein belongs to the class-II aminoacyl-tRNA synthetase family. It depends on Zn(2+) as a cofactor.

It is found in the cytoplasm. It catalyses the reaction tRNA(Ala) + L-alanine + ATP = L-alanyl-tRNA(Ala) + AMP + diphosphate. Catalyzes the attachment of alanine to tRNA(Ala) in a two-step reaction: alanine is first activated by ATP to form Ala-AMP and then transferred to the acceptor end of tRNA(Ala). Also edits incorrectly charged Ser-tRNA(Ala) and Gly-tRNA(Ala) via its editing domain. The protein is Alanine--tRNA ligase of Desulfotalea psychrophila (strain LSv54 / DSM 12343).